A 160-amino-acid chain; its full sequence is Large ribosomal subunit protein uL11 (160 aa).

It belongs to the universal ribosomal protein uL11 family. In terms of assembly, part of the ribosomal stalk of the 50S ribosomal subunit. Interacts with L10 and the large rRNA to form the base of the stalk. L10 forms an elongated spine to which L12 dimers bind in a sequential fashion forming a multimeric L10(L12)X complex.

Its function is as follows. Forms part of the ribosomal stalk which helps the ribosome interact with GTP-bound translation factors. The sequence is that of Large ribosomal subunit protein uL11 from Methanothermobacter thermautotrophicus (strain ATCC 29096 / DSM 1053 / JCM 10044 / NBRC 100330 / Delta H) (Methanobacterium thermoautotrophicum).